Here is a 379-residue protein sequence, read N- to C-terminus: Oxidoreductase chry3 (379 aa).

Disordered regions lie at residues 1 to 23 (MTTA…QPTP) and 126 to 150 (EGDD…TSHM). Acidic residues predominate over residues 126 to 138 (EGDDSAPAEEEAD).

The protein belongs to the asaB hydroxylase/desaturase family.

The protein operates within pigment biosynthesis. In terms of biological role, oxidoreductase; part of the gene cluster that mediates the biosynthesis of the yellow pigment chrysogine. Pyruvic acid and anthranilic acid are likely substrates for the nonribosomal peptide synthetase chry1/NRPS14, with pyruvic acid adenylated by the first A domain and anthranilic acid by the second. If pyruvic acid and anthranilic acid are merged and released from chry1/NRPS14 by hydrolysis, a subsequent amidation would lead to 2-pyruvoylaminobenzamide. This process is probably catalyzed by the amidotransferase chry2 using glutamine as amino donor. The dehydrogenase chry5 that has a terminal berberine bridge domain for C-N cyclization could catalyze the cyclization of 2-pyruvoylaminobenzamide to yield acetyl-4(3H)-quinazolidinone. A final reduction of acetyl-4(3H)-quinazolidinone catalyzed by the oxidoreductase chry4 would result in chrysogine. The protein is Oxidoreductase chry3 of Gibberella zeae (strain ATCC MYA-4620 / CBS 123657 / FGSC 9075 / NRRL 31084 / PH-1) (Wheat head blight fungus).